We begin with the raw amino-acid sequence, 210 residues long: Imidazoleglycerol-phosphate dehydratase (210 aa).

Belongs to the imidazoleglycerol-phosphate dehydratase family.

It localises to the cytoplasm. It carries out the reaction D-erythro-1-(imidazol-4-yl)glycerol 3-phosphate = 3-(imidazol-4-yl)-2-oxopropyl phosphate + H2O. Its pathway is amino-acid biosynthesis; L-histidine biosynthesis; L-histidine from 5-phospho-alpha-D-ribose 1-diphosphate: step 6/9. The chain is Imidazoleglycerol-phosphate dehydratase from Acidovorax ebreus (strain TPSY) (Diaphorobacter sp. (strain TPSY)).